The primary structure comprises 90 residues: MVGISELSKEVAKKANTTQKVARTVIKSFLDEIVSQANGGQKINLAGFGIFERRTQGPRKARNPQTKKVIEVPSKKKFVFRASSKIKYQQ.

This sequence belongs to the bacterial histone-like protein family. Homotetramer.

Its function is as follows. Histone-like DNA-binding protein which is capable of wrapping DNA to stabilize it, and thus to prevent its denaturation under extreme environmental conditions. The polypeptide is DNA-binding protein HTa (Thermoplasma acidophilum (strain ATCC 25905 / DSM 1728 / JCM 9062 / NBRC 15155 / AMRC-C165)).